Consider the following 601-residue polypeptide: Translation initiation factor IF-2 (601 aa).

The disordered stretch occupies residues 54–101 (GHTASAEPAPAQASGSPASPAQTEAQEAPQPTATATAEREPAAPPARE). Residues 57-89 (ASAEPAPAQASGSPASPAQTEAQEAPQPTATAT) show a composition bias toward low complexity. In terms of domain architecture, tr-type G spans 104–273 (HRAPVVTIMG…SLTAELEDLR (170 aa)). The interval 113–120 (GHVDHGKT) is G1. 113–120 (GHVDHGKT) provides a ligand contact to GTP. Residues 138–142 (GITQH) form a G2 region. Positions 159–162 (DTPG) are G3. GTP is bound by residues 159 to 163 (DTPGH) and 213 to 216 (NKVD). Residues 213–216 (NKVD) form a G4 region. The interval 249–251 (SAK) is G5.

It belongs to the TRAFAC class translation factor GTPase superfamily. Classic translation factor GTPase family. IF-2 subfamily.

Its subcellular location is the cytoplasm. One of the essential components for the initiation of protein synthesis. Protects formylmethionyl-tRNA from spontaneous hydrolysis and promotes its binding to the 30S ribosomal subunits. Also involved in the hydrolysis of GTP during the formation of the 70S ribosomal complex. This chain is Translation initiation factor IF-2, found in Deinococcus geothermalis (strain DSM 11300 / CIP 105573 / AG-3a).